The sequence spans 407 residues: L-cysteine:1D-myo-inositol 2-amino-2-deoxy-alpha-D-glucopyranoside ligase (407 aa).

The tract at residues 1–22 is disordered; sequence MRSWSAPDIVPLPGTGGPLRVH. Zn(2+) is bound at residue Cys43. L-cysteinyl-5'-AMP is bound by residues 43-46, Thr58, and 81-83; these read CGIT and NTT. The 'HIGH' region motif lies at 45-55; it reads ITPYDAAHLGH. The short motif at 183 to 188 is the 'ERGGDP' region element; it reads ERGGDP. Trp223 contacts L-cysteinyl-5'-AMP. Zn(2+) is bound at residue Cys227. Position 245-247 (245-247) interacts with L-cysteinyl-5'-AMP; the sequence is GSD. His252 serves as a coordination point for Zn(2+). Val278 lines the L-cysteinyl-5'-AMP pocket. Residues 284-288 carry the 'KMSKS' region motif; the sequence is KMSKS.

This sequence belongs to the class-I aminoacyl-tRNA synthetase family. MshC subfamily. As to quaternary structure, monomer. Zn(2+) serves as cofactor.

The enzyme catalyses 1D-myo-inositol 2-amino-2-deoxy-alpha-D-glucopyranoside + L-cysteine + ATP = 1D-myo-inositol 2-(L-cysteinylamino)-2-deoxy-alpha-D-glucopyranoside + AMP + diphosphate + H(+). Catalyzes the ATP-dependent condensation of GlcN-Ins and L-cysteine to form L-Cys-GlcN-Ins. In Nocardiopsis dassonvillei (strain ATCC 23218 / DSM 43111 / CIP 107115 / JCM 7437 / KCTC 9190 / NBRC 14626 / NCTC 10488 / NRRL B-5397 / IMRU 509) (Actinomadura dassonvillei), this protein is L-cysteine:1D-myo-inositol 2-amino-2-deoxy-alpha-D-glucopyranoside ligase.